Here is an 86-residue protein sequence, read N- to C-terminus: DNA-directed RNA polymerase subunit omega (86 aa).

The protein belongs to the RNA polymerase subunit omega family. As to quaternary structure, the RNAP catalytic core consists of 2 alpha, 1 beta, 1 beta' and 1 omega subunit. When a sigma factor is associated with the core the holoenzyme is formed, which can initiate transcription.

The enzyme catalyses RNA(n) + a ribonucleoside 5'-triphosphate = RNA(n+1) + diphosphate. In terms of biological role, promotes RNA polymerase assembly. Latches the N- and C-terminal regions of the beta' subunit thereby facilitating its interaction with the beta and alpha subunits. This Psychrobacter sp. (strain PRwf-1) protein is DNA-directed RNA polymerase subunit omega.